The sequence spans 115 residues: Large ribosomal subunit protein bL20 (115 aa).

The protein belongs to the bacterial ribosomal protein bL20 family.

Functionally, binds directly to 23S ribosomal RNA and is necessary for the in vitro assembly process of the 50S ribosomal subunit. It is not involved in the protein synthesizing functions of that subunit. The protein is Large ribosomal subunit protein bL20 of Myxococcus xanthus (strain DK1622).